The primary structure comprises 118 residues: Small ribosomal subunit protein uS13 (118 aa).

Positions 92–118 (RRGLPVRGQRTKTNARTRKGPRKPIKK) are disordered.

This sequence belongs to the universal ribosomal protein uS13 family. In terms of assembly, part of the 30S ribosomal subunit. Forms a loose heterodimer with protein S19. Forms two bridges to the 50S subunit in the 70S ribosome.

In terms of biological role, located at the top of the head of the 30S subunit, it contacts several helices of the 16S rRNA. In the 70S ribosome it contacts the 23S rRNA (bridge B1a) and protein L5 of the 50S subunit (bridge B1b), connecting the 2 subunits; these bridges are implicated in subunit movement. Contacts the tRNAs in the A and P-sites. The polypeptide is Small ribosomal subunit protein uS13 (Yersinia pestis).